The primary structure comprises 178 residues: Thioredoxin F1, chloroplastic (178 aa).

The disordered stretch occupies residues M1–G22. The N-terminal 57 residues, M1–R57, are a transit peptide targeting the chloroplast. The span at L7 to T18 shows a compositional bias: polar residues. Residues C58 to S174 form the Thioredoxin domain. Active-site nucleophile residues include C99 and C102. A disulfide bridge links C99 with C102. C126 is modified (S-glutathionyl cysteine; transient).

This sequence belongs to the thioredoxin family. Plant F-type subfamily. Post-translationally, glutathionylation at Cys-126 decreases its ability to be reduced by ferredoxin-thioredoxin reductase and reduces its efficiency in activating target chloroplastic enzymes.

The protein localises to the plastid. Its subcellular location is the chloroplast stroma. Functionally, thiol-disulfide oxidoreductase involved in the redox regulation of enzymes of both reductive pentose phosphate pathway (Calvin-Benson cycle) and oxidative pentose phosphate pathway. Under light or reducing conditions, activates in chloroplast the glyceraldehyde-3-phosphate dehydrogenase, the phosphoribulokinase and the fructose-1,6-bisphosphate phosphatase, and inhibits the glucose-6-phosphate dehydrogenase. This is Thioredoxin F1, chloroplastic from Arabidopsis thaliana (Mouse-ear cress).